The primary structure comprises 475 residues: Pyruvate kinase (475 aa).

A substrate-binding site is contributed by R36. K(+)-binding residues include N38, S40, and D70. 38–41 (NFSH) serves as a coordination point for ATP. ATP-binding residues include R77 and K158. E223 is a Mg(2+) binding site. Substrate is bound by residues G246, D247, and T279. D247 serves as a coordination point for Mg(2+).

This sequence belongs to the pyruvate kinase family. In terms of assembly, homotetramer. Requires a divalent metal cation as cofactor.

It catalyses the reaction pyruvate + ATP = phosphoenolpyruvate + ADP + H(+). Its pathway is carbohydrate degradation; glycolysis; pyruvate from D-glyceraldehyde 3-phosphate: step 5/5. This Thermococcus litoralis (strain ATCC 51850 / DSM 5473 / JCM 8560 / NS-C) protein is Pyruvate kinase (pki).